The chain runs to 418 residues: Protease LasA (418 aa).

A signal peptide spans 1-31; it reads MQHKRSRAMASPRSPFLFVLLALAVGGTANA. The propeptide occupies 32–236; that stretch reads HDDGLPAFRY…ARQLQAKAAL (205 aa). Histidine 259 and aspartate 272 together coordinate Zn(2+). A disulfide bond links cysteine 301 and cysteine 347. Catalysis depends on proton donor/acceptor residues histidine 317 and histidine 356. Histidine 358 contributes to the Zn(2+) binding site. Residues cysteine 391 and cysteine 406 are joined by a disulfide bond.

The protein belongs to the peptidase M23A family. It depends on Zn(2+) as a cofactor. Processing of pro-LasA can occur extracellularly and requires elastase (lasB). Secretion and processing may be linked.

Its subcellular location is the secreted. Functionally, involved in proteolysis and elastolysis (degradation of the host protein elastin). Has staphylolytic activity (degrades pentaglycine cross-links in cell wall peptidoglycan), preferring Gly-Gly-|-X substrates where X is Ala or Gly. Enhances the elastolytic but not proteolytic activity of elastase (lasB) and elastolytic activity of other proteases. Degradation of host elastin is likely to contribute to the pathogenicity of P.aeruginosa. While either His-317 or His-356 can abstract a proton in the hydrolysis reaction, the same residue performs both functions in a given catalytic cycle, with the other stabilizing the catalytic intermediate. This Pseudomonas aeruginosa (strain ATCC 15692 / DSM 22644 / CIP 104116 / JCM 14847 / LMG 12228 / 1C / PRS 101 / PAO1) protein is Protease LasA (lasA).